A 407-amino-acid chain; its full sequence is D-3-phosphoglycerate dehydrogenase (407 aa).

NAD(+) contacts are provided by residues 161 to 162 (HI), D181, 238 to 240 (ASR), and D264. R240 is a catalytic residue. Residue E269 is part of the active site. The active-site Proton donor is H292. 292-295 (HIGG) contributes to the NAD(+) binding site. An ACT domain is found at 340 to 407 (RILNIHNNKP…PNSIKTRVLY (68 aa)).

This sequence belongs to the D-isomer specific 2-hydroxyacid dehydrogenase family.

The enzyme catalyses (2R)-3-phosphoglycerate + NAD(+) = 3-phosphooxypyruvate + NADH + H(+). It carries out the reaction (R)-2-hydroxyglutarate + NAD(+) = 2-oxoglutarate + NADH + H(+). Its pathway is amino-acid biosynthesis; L-serine biosynthesis; L-serine from 3-phospho-D-glycerate: step 1/3. Functionally, catalyzes the reversible oxidation of 3-phospho-D-glycerate to 3-phosphonooxypyruvate, the first step of the phosphorylated L-serine biosynthesis pathway. Also catalyzes the reversible oxidation of 2-hydroxyglutarate to 2-oxoglutarate. This chain is D-3-phosphoglycerate dehydrogenase (serA), found in Dictyostelium discoideum (Social amoeba).